Consider the following 277-residue polypeptide: Thymidylate synthase (277 aa).

Residue Arg-21 coordinates dUMP. His-51 lines the (6R)-5,10-methylene-5,6,7,8-tetrahydrofolate pocket. 126–127 serves as a coordination point for dUMP; sequence RR. Catalysis depends on Cys-159, which acts as the Nucleophile. DUMP is bound by residues 179 to 182, Asn-190, and 220 to 222; these read RSAD and HLY. Asp-182 contacts (6R)-5,10-methylene-5,6,7,8-tetrahydrofolate. A (6R)-5,10-methylene-5,6,7,8-tetrahydrofolate-binding site is contributed by Ser-276.

It belongs to the thymidylate synthase family. Bacterial-type ThyA subfamily. Homodimer.

It localises to the cytoplasm. It carries out the reaction dUMP + (6R)-5,10-methylene-5,6,7,8-tetrahydrofolate = 7,8-dihydrofolate + dTMP. Its pathway is pyrimidine metabolism; dTTP biosynthesis. Its function is as follows. Catalyzes the reductive methylation of 2'-deoxyuridine-5'-monophosphate (dUMP) to 2'-deoxythymidine-5'-monophosphate (dTMP) while utilizing 5,10-methylenetetrahydrofolate (mTHF) as the methyl donor and reductant in the reaction, yielding dihydrofolate (DHF) as a by-product. This enzymatic reaction provides an intracellular de novo source of dTMP, an essential precursor for DNA biosynthesis. The chain is Thymidylate synthase from Hydrogenovibrio crunogenus (strain DSM 25203 / XCL-2) (Thiomicrospira crunogena).